The primary structure comprises 224 residues: UPF0758 protein BPUM_2444 (224 aa).

Positions 102-224 (VIRTPEDGAN…FVSLKEKGYL (123 aa)) constitute an MPN domain. Residues H173, H175, and D186 each coordinate Zn(2+). Residues 173 to 186 (HNHPSGDPTPSRED) carry the JAMM motif motif.

This sequence belongs to the UPF0758 family.

The chain is UPF0758 protein BPUM_2444 from Bacillus pumilus (strain SAFR-032).